Reading from the N-terminus, the 532-residue chain is Variant surface glycoprotein ILTAT 1.23 (532 aa).

Positions 1–23 (MFKNINAAVLLLILSTRNDYANA) are cleaved as a signal peptide. Residue asparagine 66 is glycosylated (N-linked (GlcNAc...) asparagine). 2 disordered regions span residues 79–107 (APKK…RNHA) and 408–504 (MQAG…DQDK). Asparagine 419 carries N-linked (GlcNAc...) asparagine glycosylation. Over residues 427-445 (CKWEEKDGKDGKCVADDSK) the composition is skewed to basic and acidic residues. The span at 450 to 470 (GNAPAGAGDGTAGTTTTPNCA) shows a compositional bias: low complexity. 2 stretches are compositionally biased toward basic and acidic residues: residues 472–484 (HTDK…ENKG) and 494–504 (KGKEGESDQDK). N-linked (GlcNAc...) asparagine glycosylation is present at asparagine 509. The GPI-anchor amidated asparagine moiety is linked to residue asparagine 509. Residues 510-532 (GSFLAKKKFALSVVSAAFTALLF) constitute a propeptide, removed in mature form.

It is found in the cell membrane. Functionally, VSG forms a coat on the surface of the parasite. The trypanosome evades the immune response of the host by expressing a series of antigenically distinct VSGs from an estimated 1000 VSG genes. This is Variant surface glycoprotein ILTAT 1.23 from Trypanosoma brucei brucei.